A 496-amino-acid chain; its full sequence is Acetyl-coenzyme A carboxylase carboxyl transferase subunit beta, chloroplastic (496 aa).

The 268-residue stretch at 229–496 (LWVQCENCYG…FFPLNKNFIK (268 aa)) folds into the CoA carboxyltransferase N-terminal domain. Zn(2+) contacts are provided by cysteine 233, cysteine 236, cysteine 252, and cysteine 255. The C4-type zinc finger occupies 233-255 (CENCYGLNYKKFFRLKLHICEQC).

This sequence belongs to the AccD/PCCB family. Acetyl-CoA carboxylase is a heterohexamer composed of biotin carboxyl carrier protein, biotin carboxylase and 2 subunits each of ACCase subunit alpha and ACCase plastid-coded subunit beta (accD). Zn(2+) serves as cofactor.

It localises to the plastid. The protein localises to the chloroplast stroma. It carries out the reaction N(6)-carboxybiotinyl-L-lysyl-[protein] + acetyl-CoA = N(6)-biotinyl-L-lysyl-[protein] + malonyl-CoA. It functions in the pathway lipid metabolism; malonyl-CoA biosynthesis; malonyl-CoA from acetyl-CoA: step 1/1. Its function is as follows. Component of the acetyl coenzyme A carboxylase (ACC) complex. Biotin carboxylase (BC) catalyzes the carboxylation of biotin on its carrier protein (BCCP) and then the CO(2) group is transferred by the transcarboxylase to acetyl-CoA to form malonyl-CoA. This Ranunculus macranthus (Large buttercup) protein is Acetyl-coenzyme A carboxylase carboxyl transferase subunit beta, chloroplastic.